A 463-amino-acid polypeptide reads, in one-letter code: Chaperone SurA (463 aa).

The signal sequence occupies residues 1–25 (MTKPFSVVLASLLAITSTVSPLASA). 2 PpiC domains span residues 174–276 (GSQY…KLVE) and 289–388 (VTEY…QRVG). 2 disordered regions span residues 329–348 (ATAKESSEDTNSRGQGGDLG) and 431–463 (YRTGDRADDNATAAPAKSPDPAAPSPPPAKPTR). A compositionally biased stretch (low complexity) spans 441–450 (ATAAPAKSPD). Over residues 451-463 (PAAPSPPPAKPTR) the composition is skewed to pro residues.

The protein localises to the periplasm. It catalyses the reaction [protein]-peptidylproline (omega=180) = [protein]-peptidylproline (omega=0). In terms of biological role, chaperone involved in the correct folding and assembly of outer membrane proteins. Recognizes specific patterns of aromatic residues and the orientation of their side chains, which are found more frequently in integral outer membrane proteins. May act in both early periplasmic and late outer membrane-associated steps of protein maturation. This is Chaperone SurA from Xanthomonas axonopodis pv. citri (strain 306).